A 307-amino-acid polypeptide reads, in one-letter code: MPEGKTDMERIGLFSEMGYTSIGDKYAAPGSKPFNESASKNRQMLPGGSKSMANMLGGYFDGQFKRVFEGESYSDPFKQRRQHRMQQSKKNLGKPFLPSSGEKKRSGLGSFYGTLGGPVVAFSAELKSRKAYTAPGKNFYTNPPKDGSGYGYPSVTIGKPYPYSSENYDISRELIKKEIEHHKSKLKGGAFKLNLHPKDYFEPNPYYTDKTLPPLKVHSQKKETEKPFKPSSPAKEAGGMKAGTFDPYPTHSNDPYTAKPSKTPVKERKVFHPPGGPKTYPVHSILTSNVIKSVTALNYKTVNLASY.

Disordered regions lie at residues 73–102 and 218–279; these read YSDP…SSGE and HSQK…GPKT.

It belongs to the CFAP96 family.

It localises to the cytoplasm. It is found in the cytoskeleton. The protein resides in the microtubule organizing center. Its subcellular location is the centrosome. This Xenopus laevis (African clawed frog) protein is Cilia-and flagella-associated protein 96 (cfap96.L).